The sequence spans 508 residues: Mitochondrial distribution and morphology protein 10 (508 aa).

A disordered region spans residues 160 to 195 (PAHPTSTRPTPPQTPPSHTRQPSEPSTPAPSPTPGN).

The protein belongs to the MDM10 family. In terms of assembly, component of the ER-mitochondria encounter structure (ERMES) or MDM complex, composed of MMM1, MDM10, MDM12 and MDM34. Associates with the mitochondrial outer membrane sorting assembly machinery SAM(core) complex.

The protein localises to the mitochondrion outer membrane. Its function is as follows. Component of the ERMES/MDM complex, which serves as a molecular tether to connect the endoplasmic reticulum and mitochondria. Components of this complex are involved in the control of mitochondrial shape and protein biogenesis and may function in phospholipid exchange. MDM10 is involved in the late assembly steps of the general translocase of the mitochondrial outer membrane (TOM complex). Functions in the TOM40-specific route of the assembly of outer membrane beta-barrel proteins, including the association of TOM40 with the receptor TOM22 and small TOM proteins. Can associate with the SAM(core) complex as well as the MDM12-MMM1 complex, both involved in late steps of the major beta-barrel assembly pathway, that is responsible for biogenesis of all outer membrane beta-barrel proteins. May act as a switch that shuttles between both complexes and channels precursor proteins into the TOM40-specific pathway. Plays a role in mitochondrial morphology and in the inheritance of mitochondria. The protein is Mitochondrial distribution and morphology protein 10 of Cryptococcus neoformans var. neoformans serotype D (strain JEC21 / ATCC MYA-565) (Filobasidiella neoformans).